The sequence spans 294 residues: tRNA pseudouridine synthase B (294 aa).

Asp39 functions as the Nucleophile in the catalytic mechanism.

It belongs to the pseudouridine synthase TruB family. Type 1 subfamily.

It carries out the reaction uridine(55) in tRNA = pseudouridine(55) in tRNA. Its function is as follows. Responsible for synthesis of pseudouridine from uracil-55 in the psi GC loop of transfer RNAs. This is tRNA pseudouridine synthase B from Streptococcus pyogenes serotype M3 (strain ATCC BAA-595 / MGAS315).